A 387-amino-acid polypeptide reads, in one-letter code: Galactokinase (387 aa).

36–39 (EHTD) serves as a coordination point for substrate. Residues serine 70 and 125–131 (GAGLSSS) each bind ATP. Residues serine 131 and glutamate 163 each contribute to the Mg(2+) site. Aspartate 175 acts as the Proton acceptor in catalysis. Position 227 (tyrosine 227) interacts with substrate.

Belongs to the GHMP kinase family. GalK subfamily.

The protein localises to the cytoplasm. It catalyses the reaction alpha-D-galactose + ATP = alpha-D-galactose 1-phosphate + ADP + H(+). Its pathway is carbohydrate metabolism; galactose metabolism. Its function is as follows. Catalyzes the transfer of the gamma-phosphate of ATP to D-galactose to form alpha-D-galactose-1-phosphate (Gal-1-P). The protein is Galactokinase of Streptomyces coelicolor (strain ATCC BAA-471 / A3(2) / M145).